The primary structure comprises 235 residues: tRNA (guanine-N(1)-)-methyltransferase (235 aa).

S-adenosyl-L-methionine-binding positions include glycine 114 and 134–139; that span reads VGDYIL.

Belongs to the RNA methyltransferase TrmD family. As to quaternary structure, homodimer.

The protein localises to the cytoplasm. The enzyme catalyses guanosine(37) in tRNA + S-adenosyl-L-methionine = N(1)-methylguanosine(37) in tRNA + S-adenosyl-L-homocysteine + H(+). Specifically methylates guanosine-37 in various tRNAs. The chain is tRNA (guanine-N(1)-)-methyltransferase from Chelativorans sp. (strain BNC1).